Reading from the N-terminus, the 282-residue chain is Phosphoglycerate mutase-like protein 1 (282 aa).

Catalysis depends on His23, which acts as the Tele-phosphohistidine intermediate. Glu135 serves as the catalytic Proton donor/acceptor.

Belongs to the phosphoglycerate mutase family.

In terms of biological role, may play a role in carbohydrates metabolism. In Arabidopsis thaliana (Mouse-ear cress), this protein is Phosphoglycerate mutase-like protein 1.